The following is a 227-amino-acid chain: Transcription elongation factor A protein-like 2 (227 aa).

Disordered stretches follow at residues Met-1–Gly-145 and Phe-202–Val-227. 5 stretches are compositionally biased toward basic and acidic residues: residues Ile-18–Asn-43, Thr-50–Ser-82, Thr-90–Glu-113, Ser-120–Arg-136, and Gly-206–Val-227.

Belongs to the TFS-II family. TFA subfamily.

It is found in the nucleus. Functionally, may be involved in transcriptional regulation. In Homo sapiens (Human), this protein is Transcription elongation factor A protein-like 2 (TCEAL2).